The sequence spans 189 residues: Translation initiation factor IF-3 (189 aa).

This sequence belongs to the IF-3 family. Monomer.

The protein resides in the cytoplasm. In terms of biological role, IF-3 binds to the 30S ribosomal subunit and shifts the equilibrium between 70S ribosomes and their 50S and 30S subunits in favor of the free subunits, thus enhancing the availability of 30S subunits on which protein synthesis initiation begins. The protein is Translation initiation factor IF-3 of Corynebacterium glutamicum (strain ATCC 13032 / DSM 20300 / JCM 1318 / BCRC 11384 / CCUG 27702 / LMG 3730 / NBRC 12168 / NCIMB 10025 / NRRL B-2784 / 534).